The chain runs to 273 residues: Homeobox protein Nkx-2.2 (273 aa).

2 disordered regions span residues 1 to 56 (MSLT…LDAV) and 90 to 131 (LAAG…KRKR). The segment covering 20 to 38 (DTNDEEGSVAEGPEEENEG) has biased composition (acidic residues). Positions 128-187 (KRKRRVLFSKAQTYELERRFRQQRYLSAPEREHLASLIRLTPTQVKIWFQNHRYKMKRAR) form a DNA-binding region, homeobox.

The protein belongs to the NK-2 homeobox family. In terms of assembly, interacts with OLIG2.

The protein localises to the nucleus. In terms of biological role, transcriptional activator involved in the development of insulin-producting beta cells in the endocrine pancreas. May also be involved in specifying diencephalic neuromeric boundaries, and in controlling the expression of genes that play a role in axonal guidance. Binds to elements within the NEUROD1 promoter. This chain is Homeobox protein Nkx-2.2 (NKX2-2), found in Homo sapiens (Human).